The following is a 148-amino-acid chain: MSEHLIVKNKKAYFNYEIIQTYQAGIVLNGPEIKSIRNHDVSINEAFVLIRKKEIYILNMNVKKYQFANYIKGLEETRTRKLLLHKKEIIKILNKIKQENLTIIPVKLYFKNDYVKLEIALAKGKKLHDKRQTIKKRDTERKELKNYK.

It belongs to the SmpB family.

Its subcellular location is the cytoplasm. In terms of biological role, required for rescue of stalled ribosomes mediated by trans-translation. Binds to transfer-messenger RNA (tmRNA), required for stable association of tmRNA with ribosomes. tmRNA and SmpB together mimic tRNA shape, replacing the anticodon stem-loop with SmpB. tmRNA is encoded by the ssrA gene; the 2 termini fold to resemble tRNA(Ala) and it encodes a 'tag peptide', a short internal open reading frame. During trans-translation Ala-aminoacylated tmRNA acts like a tRNA, entering the A-site of stalled ribosomes, displacing the stalled mRNA. The ribosome then switches to translate the ORF on the tmRNA; the nascent peptide is terminated with the 'tag peptide' encoded by the tmRNA and targeted for degradation. The ribosome is freed to recommence translation, which seems to be the essential function of trans-translation. This is SsrA-binding protein from Mycoplasma mycoides subsp. mycoides SC (strain CCUG 32753 / NCTC 10114 / PG1).